The primary structure comprises 509 residues: 2,3-bisphosphoglycerate-independent phosphoglycerate mutase (509 aa).

Asp11 serves as a coordination point for Mn(2+). Tyr35 carries the post-translational modification Phosphotyrosine. Ser61 contacts Mn(2+). The active-site Phosphoserine intermediate is the Ser61. Substrate contacts are provided by residues His122, 152–153 (RD), Arg184, Arg190, 260–263 (RPDR), and Lys335. Residues Asp402, His406, Asp443, His444, and His461 each contribute to the Mn(2+) site.

This sequence belongs to the BPG-independent phosphoglycerate mutase family. Monomer. Mn(2+) serves as cofactor.

The catalysed reaction is (2R)-2-phosphoglycerate = (2R)-3-phosphoglycerate. It functions in the pathway carbohydrate degradation; glycolysis; pyruvate from D-glyceraldehyde 3-phosphate: step 3/5. Functionally, essential for rapid growth and for sporulation. Catalyzes the interconversion of 2-phosphoglycerate and 3-phosphoglycerate. The chain is 2,3-bisphosphoglycerate-independent phosphoglycerate mutase from Bacillus cereus (strain ATCC 14579 / DSM 31 / CCUG 7414 / JCM 2152 / NBRC 15305 / NCIMB 9373 / NCTC 2599 / NRRL B-3711).